Consider the following 341-residue polypeptide: N-(sulfonatooxy)alkenimidothioic acid sulfate-lyase (epithionitrile-forming) (341 aa).

Residues 1–24 (MAPTLQGQWIKVGQKGGTGPGPRS) are disordered. Kelch repeat units follow at residues 34–82 (KLYS…VRMV), 87–133 (KIYI…FHSM), 139–194 (HVYV…VVQG), and 203–249 (ATSI…AHAV). A (Z)-N-(sulfonatooxy)alkanimidothioate contacts are provided by lysine 46, arginine 94, threonine 129, phenylalanine 130, arginine 157, glycine 186, lysine 211, and valine 244. The Proton donor role is filled by arginine 94. The active-site Proton donor is arginine 157. 3 residues coordinate Fe(2+): glutamate 260, aspartate 264, and histidine 268. Tryptophan 303 contacts a (Z)-N-(sulfonatooxy)alkanimidothioate.

Homodimer. Interacts with WRKY53. The cofactor is Fe(2+). Expressed in epidermal cells of all above-ground organs except the anthers, in cambial cells of leaf and stem vascular bundles, and in glucosinolates rich S-cells found in stems just below the inflorescence. Absent from roots.

The protein resides in the cytoplasm. It localises to the nucleus. It catalyses the reaction a (Z)-N-(sulfonatooxy)alkenimidothioate = an epithionitrile + sulfate. The catalysed reaction is a (Z)-N-(sulfonatooxy)alkanimidothioate = a nitrile + sulfur + sulfate. The enzyme catalyses (Z)-(indol-3-yl)-N-(sulfonatooxy)methanimidothioate = (indol-3-yl)acetonitrile + sulfur + sulfate. Not dependent on the presence of Fe(2+) although supplemental Fe(2+) increases nitriles formation. Specifier protein that contributes to constitutive and herbivore-induced simple nitrile formation. Converts glucosinolates both to epithionitriles and to simple nitriles in the presence of myrosinase. Promotes the formation of epithionitriles after hydrolysis of alkenylglucosinolates containing a terminal double bond. Mediates indol-3-ylacetonitrile (IACN) production from indol-3-ylmethylglucosinolate (glucobrassicin). Triggers the production of 3,4-epithiobutylnitrile from 2-propenylisothiocyanate, product of 2-propenylglucosinolate (sinigrin) catalysis by myrosinase. Seems inactive toward benzylglucosinolate (glucotropaeolin). Acts as a negative regulator of senescence. The sequence is that of N-(sulfonatooxy)alkenimidothioic acid sulfate-lyase (epithionitrile-forming) from Arabidopsis thaliana (Mouse-ear cress).